Reading from the N-terminus, the 92-residue chain is Transcription factor PRE5 (92 aa).

The region spanning 4-59 (RRSRQTSNASRISDDQMIDLVSKLRQFLPEIHERRRSDKVSASKVLQETCNYIRKL) is the bHLH domain.

It belongs to the bHLH protein family. As to quaternary structure, interacts with IBH1.

It localises to the nucleus. In terms of biological role, atypical and probable non DNA-binding bHLH transcription factor that integrates multiple signaling pathways to regulate cell elongation and plant development. May have a regulatory role in various aspects of gibberellin-dependent growth and development. The sequence is that of Transcription factor PRE5 (PRE5) from Arabidopsis thaliana (Mouse-ear cress).